Here is a 125-residue protein sequence, read N- to C-terminus: Small ribosomal subunit protein uS13 (125 aa).

The protein belongs to the universal ribosomal protein uS13 family. In terms of assembly, part of the 30S ribosomal subunit. Forms a loose heterodimer with protein S19. Forms two bridges to the 50S subunit in the 70S ribosome.

Functionally, located at the top of the head of the 30S subunit, it contacts several helices of the 16S rRNA. In the 70S ribosome it contacts the 23S rRNA (bridge B1a) and protein L5 of the 50S subunit (bridge B1b), connecting the 2 subunits; these bridges are implicated in subunit movement. Contacts the tRNAs in the A and P-sites. The polypeptide is Small ribosomal subunit protein uS13 (Rickettsia bellii (strain OSU 85-389)).